A 406-amino-acid chain; its full sequence is Tryptophan synthase beta chain (406 aa).

The residue at position 99 (Lys-99) is an N6-(pyridoxal phosphate)lysine.

This sequence belongs to the TrpB family. As to quaternary structure, tetramer of two alpha and two beta chains. Pyridoxal 5'-phosphate is required as a cofactor.

It catalyses the reaction (1S,2R)-1-C-(indol-3-yl)glycerol 3-phosphate + L-serine = D-glyceraldehyde 3-phosphate + L-tryptophan + H2O. The protein operates within amino-acid biosynthesis; L-tryptophan biosynthesis; L-tryptophan from chorismate: step 5/5. In terms of biological role, the beta subunit is responsible for the synthesis of L-tryptophan from indole and L-serine. The sequence is that of Tryptophan synthase beta chain from Sinorhizobium fredii (strain NBRC 101917 / NGR234).